The sequence spans 408 residues: Neutral cholesterol ester hydrolase 1 (408 aa).

Residues 1–4 (MRSS) lie on the Cytoplasmic side of the membrane. The chain crosses the membrane as a helical; Signal-anchor for type II membrane protein span at residues 5–25 (CVLLTALLALAAYYIYIPLPS). Residues 26-408 (SVSDPWKLML…SYIKWLDQNL (383 aa)) are Lumenal-facing. Residues 113–115 (HGG) carry the Involved in the stabilization of the negatively charged intermediate by the formation of the oxyanion hole motif. Residue Ser191 is part of the active site. N-linked (GlcNAc...) asparagine glycosylation is found at Asn270 and Asn287. Residues Asp348 and His378 contribute to the active site. Asn389 carries N-linked (GlcNAc...) asparagine glycosylation.

The protein belongs to the 'GDXG' lipolytic enzyme family. Post-translationally, N-glycosylated.

The protein resides in the cell membrane. Its subcellular location is the microsome. It catalyses the reaction a 1-O-alkyl-2-acetyl-sn-glycerol + H2O = a 1-O-alkyl-sn-glycerol + acetate + H(+). It carries out the reaction 1-O-hexadecyl-2-acetyl-sn-glycerol + H2O = 1-O-hexadecyl-sn-glycerol + acetate + H(+). The enzyme catalyses a cholesterol ester + H2O = cholesterol + a fatty acid + H(+). The catalysed reaction is cholesteryl (9Z-octadecenoate) + H2O = cholesterol + (9Z)-octadecenoate + H(+). In terms of biological role, hydrolyzes 2-acetyl monoalkylglycerol ether (1-O-alkyl-2-acetyl-sn-glycerol), the penultimate precursor of the pathway for de novo synthesis of platelet-activating factor. May be responsible for the hydrolysis of cholesterol esters (such as cholesteryl (9Z-octadecenoate)) in macrophages. Also involved in organ detoxification by hydrolyzing exogenous organophosphorus compounds. The protein is Neutral cholesterol ester hydrolase 1 (NCEH1) of Bos taurus (Bovine).